Consider the following 322-residue polypeptide: Ribosomal RNA small subunit methyltransferase H (322 aa).

Residues 40–42, Asp60, Phe84, Asp106, and Gln113 contribute to the S-adenosyl-L-methionine site; that span reads GGH.

This sequence belongs to the methyltransferase superfamily. RsmH family.

It localises to the cytoplasm. The catalysed reaction is cytidine(1402) in 16S rRNA + S-adenosyl-L-methionine = N(4)-methylcytidine(1402) in 16S rRNA + S-adenosyl-L-homocysteine + H(+). Functionally, specifically methylates the N4 position of cytidine in position 1402 (C1402) of 16S rRNA. This is Ribosomal RNA small subunit methyltransferase H from Aggregatibacter aphrophilus (strain NJ8700) (Haemophilus aphrophilus).